The following is a 384-amino-acid chain: 5-cytosine rRNA methyltransferase NSUN4 (384 aa).

Residues M1 to Q25 constitute a mitochondrion transit peptide. S-adenosyl-L-methionine-binding residues include G185, G186, K187, and D204. S206 carries the phosphoserine modification. Residues R209, D237, G238, and D255 each contribute to the S-adenosyl-L-methionine site. The active-site Nucleophile is the C310.

It belongs to the class I-like SAM-binding methyltransferase superfamily. RsmB/NOP family. As to quaternary structure, heterodimer with MTERFD2/MTERF4; this interaction seems to be required for NSUN4 recruitment to the mitochondrial large ribosomal subunit.

The protein resides in the mitochondrion. The catalysed reaction is a cytidine in rRNA + S-adenosyl-L-methionine = a 5-methylcytidine in rRNA + S-adenosyl-L-homocysteine + H(+). It carries out the reaction a cytidine in mRNA + S-adenosyl-L-methionine = a 5-methylcytidine in mRNA + S-adenosyl-L-homocysteine + H(+). Mitochondrial RNA cytosine C(5)-methyltransferase that methylates cytosine to 5-methylcytosine (m5C) in various RNAs, such as rRNAs, mRNAs and some long non-coding RNAs (lncRNAs). Involved in mitochondrial ribosome small subunit (SSU) maturation by catalyzing methylation of mitochondrial 12S rRNA; the function is independent of MTERFD2/MTERF4 and assembled mitochondrial ribosome large subunit (LSU). Targeted to LSU by MTERFD2/MTERF4 and probably is involved in a final step in ribosome biogenesis to ensure that SSU and LSU are assembled. In vitro can methylate 16S rRNA of the LSU; the methylation is enhanced by MTERFD/MTERF4. Also acts as a regulator of innate immunity by marking double-stranded mitochondrial RNAs(mt-dsRNAs) generated in response to stress: catalyzes m5C modification on mitochondrial RNAs, such as a mRNAs and lncRNAs, with a preference for the termini of light-strand lncRNAs, promoting their degradation and cytosolic release. Modified light-strand lncRNAs are then recognized by C1QBP reader and recruited to the mitochondrial degradosome complex, which promotes their degradation. The chain is 5-cytosine rRNA methyltransferase NSUN4 (NSUN4) from Bos taurus (Bovine).